A 634-amino-acid polypeptide reads, in one-letter code: Chaperone protein HtpG (634 aa).

Residues Met1–Arg342 form an a; substrate-binding region. The interval Glu343–Arg559 is b. The tract at residues Leu560 to Asp634 is c.

The protein belongs to the heat shock protein 90 family. Homodimer.

Its subcellular location is the cytoplasm. Molecular chaperone. Has ATPase activity. This chain is Chaperone protein HtpG, found in Nitrosococcus oceani (strain ATCC 19707 / BCRC 17464 / JCM 30415 / NCIMB 11848 / C-107).